A 101-amino-acid chain; its full sequence is Integration host factor subunit beta (101 aa).

The protein belongs to the bacterial histone-like protein family. Heterodimer of an alpha and a beta chain.

Its function is as follows. This protein is one of the two subunits of integration host factor, a specific DNA-binding protein that functions in genetic recombination as well as in transcriptional and translational control. This chain is Integration host factor subunit beta, found in Janthinobacterium sp. (strain Marseille) (Minibacterium massiliensis).